We begin with the raw amino-acid sequence, 485 residues long: Amyloid beta A4 precursor protein-binding family B member 1-interacting protein (485 aa).

A compositionally biased stretch (polar residues) spans glutamine 84–phenylalanine 107. The tract at residues glutamine 84–alanine 157 is disordered. Pro residues predominate over residues leucine 125 to proline 147. The 88-residue stretch at lysine 175–lysine 262 folds into the Ras-associating domain. The 110-residue stretch at valine 305–tyrosine 414 folds into the PH domain.

Belongs to the MRL family.

It is found in the cell membrane. The protein resides in the cytoplasm. It localises to the cytoskeleton. Functionally, appears to function in the signal transduction from Ras activation to actin cytoskeletal remodeling. The protein is Amyloid beta A4 precursor protein-binding family B member 1-interacting protein (APBB1IP) of Gallus gallus (Chicken).